The following is a 625-amino-acid chain: tRNA uridine 5-carboxymethylaminomethyl modification enzyme MnmG (625 aa).

11-16 lines the FAD pocket; sequence GAGHAG. 271 to 285 provides a ligand contact to NAD(+); that stretch reads GPRYCPSIETKIVTF.

Belongs to the MnmG family. Homodimer. Heterotetramer of two MnmE and two MnmG subunits. Requires FAD as cofactor.

The protein localises to the cytoplasm. Functionally, NAD-binding protein involved in the addition of a carboxymethylaminomethyl (cmnm) group at the wobble position (U34) of certain tRNAs, forming tRNA-cmnm(5)s(2)U34. This chain is tRNA uridine 5-carboxymethylaminomethyl modification enzyme MnmG, found in Parabacteroides distasonis (strain ATCC 8503 / DSM 20701 / CIP 104284 / JCM 5825 / NCTC 11152).